The primary structure comprises 326 residues: Thioredoxin reductase (326 aa).

40-47 (TGNNKGGQ) contacts FAD. Cysteines 141 and 144 form a disulfide. 291–300 (DVIDHVYKQA) lines the FAD pocket.

The protein belongs to the class-II pyridine nucleotide-disulfide oxidoreductase family. Homodimer. It depends on FAD as a cofactor.

It is found in the cytoplasm. The enzyme catalyses [thioredoxin]-dithiol + NADP(+) = [thioredoxin]-disulfide + NADPH + H(+). This chain is Thioredoxin reductase (trxB), found in Buchnera aphidicola subsp. Baizongia pistaciae (strain Bp).